Consider the following 264-residue polypeptide: 3-methyl-2-oxobutanoate hydroxymethyltransferase (264 aa).

Residues Asp-45 and Asp-84 each contribute to the Mg(2+) site. 3-methyl-2-oxobutanoate is bound by residues 45-46 (DS), Asp-84, and Lys-112. Residue Glu-114 participates in Mg(2+) binding. The Proton acceptor role is filled by Glu-181.

It belongs to the PanB family. As to quaternary structure, homodecamer; pentamer of dimers. Requires Mg(2+) as cofactor.

Its subcellular location is the cytoplasm. The catalysed reaction is 3-methyl-2-oxobutanoate + (6R)-5,10-methylene-5,6,7,8-tetrahydrofolate + H2O = 2-dehydropantoate + (6S)-5,6,7,8-tetrahydrofolate. Its pathway is cofactor biosynthesis; (R)-pantothenate biosynthesis; (R)-pantoate from 3-methyl-2-oxobutanoate: step 1/2. Functionally, catalyzes the reversible reaction in which hydroxymethyl group from 5,10-methylenetetrahydrofolate is transferred onto alpha-ketoisovalerate to form ketopantoate. This chain is 3-methyl-2-oxobutanoate hydroxymethyltransferase, found in Vibrio atlanticus (strain LGP32) (Vibrio splendidus (strain Mel32)).